Reading from the N-terminus, the 129-residue chain is Glycine cleavage system H protein 2 (129 aa).

A Lipoyl-binding domain is found at 24 to 105 (SVTVGISDHA…PYVSWFFKLK (82 aa)). Lys-65 carries the post-translational modification N6-lipoyllysine.

It belongs to the GcvH family. As to quaternary structure, the glycine cleavage system is composed of four proteins: P, T, L and H. The cofactor is (R)-lipoate.

The glycine cleavage system catalyzes the degradation of glycine. The H protein shuttles the methylamine group of glycine from the P protein to the T protein. This is Glycine cleavage system H protein 2 from Pseudomonas aeruginosa (strain ATCC 15692 / DSM 22644 / CIP 104116 / JCM 14847 / LMG 12228 / 1C / PRS 101 / PAO1).